The sequence spans 137 residues: Large ribosomal subunit protein uL16 (137 aa).

It belongs to the universal ribosomal protein uL16 family. Part of the 50S ribosomal subunit.

Binds 23S rRNA and is also seen to make contacts with the A and possibly P site tRNAs. The sequence is that of Large ribosomal subunit protein uL16 from Nitratidesulfovibrio vulgaris (strain DSM 19637 / Miyazaki F) (Desulfovibrio vulgaris).